Consider the following 747-residue polypeptide: Probable copper-transporting ATPase PacS (747 aa).

At 1–101 the chain is on the cytoplasmic side; sequence MVNQQTLTLR…RQLAQRVWVS (101 aa). Positions 3 to 69 constitute an HMA domain; sequence NQQTLTLRGM…AIEAAGYHAF (67 aa). Residues Cys14 and Cys17 each coordinate a metal cation. The chain crosses the membrane as a helical span at residues 102–122; it reads GLIASLLVIGSLPMMLGISIP. Over 123–132 the chain is Extracellular; sequence GIPMWLHHPG. Residues 133–151 form a helical membrane-spanning segment; sequence LQLGLTLPVLWAGRSFFIN. The Cytoplasmic segment spans residues 152–158; that stretch reads AWKAFRQ. A helical membrane pass occupies residues 159-179; it reads NTATMDTLVAVGTGAAFLYSL. The Extracellular segment spans residues 180–199; it reads AVTLFPQWLTRQGLPPDVYY. Residues 200–220 traverse the membrane as a helical segment; sequence EAIAVIIALLLLGRSLEERAK. Topologically, residues 221–348 are cytoplasmic; sequence GQTSAAIRQL…KAPIQRLADQ (128 aa). A helical transmembrane segment spans residues 349-371; that stretch reads VTGWFVPAVIAIAILTFVLWFNW. Residues 372-378 lie on the Extracellular side of the membrane; the sequence is IGNVTLA. Residues 379–396 form a helical membrane-spanning segment; sequence LITAVGVLIIACPCALGL. At 397–688 the chain is on the cytoplasmic side; it reads ATPTSIMVGT…QLSRATMTNI (292 aa). Residue Asp434 is the 4-aspartylphosphate intermediate of the active site. Mg(2+) is bound by residues Asp634 and Asp638. A helical membrane pass occupies residues 689-708; sequence RQNLFFAFIYNVAGIPIAAG. The Extracellular portion of the chain corresponds to 709–720; that stretch reads ILYPLLGWLLSP. The helical transmembrane segment at 721–739 threads the bilayer; sequence MLAGAAMAFSSVSVVTNAL. The Cytoplasmic segment spans residues 740-747; it reads RLRQFQPR.

This sequence belongs to the cation transport ATPase (P-type) (TC 3.A.3) family. Type IB subfamily.

It localises to the cell membrane. It catalyses the reaction Cu(+)(in) + ATP + H2O = Cu(+)(out) + ADP + phosphate + H(+). May play a role in the osmotic adaptation. The chain is Probable copper-transporting ATPase PacS (pacS) from Synechococcus elongatus (strain ATCC 33912 / PCC 7942 / FACHB-805) (Anacystis nidulans R2).